The sequence spans 410 residues: Argininosuccinate synthase (410 aa).

10-18 (AYSGGLDTS) is an ATP binding site. Positions 88 and 93 each coordinate L-citrulline. Gly-118 provides a ligand contact to ATP. Positions 120, 124, and 125 each coordinate L-aspartate. Asn-124 lines the L-citrulline pocket. The L-citrulline site is built by Arg-128, Ser-177, Ser-186, Glu-262, and Tyr-274.

It belongs to the argininosuccinate synthase family. Type 1 subfamily. In terms of assembly, homotetramer.

The protein localises to the cytoplasm. The enzyme catalyses L-citrulline + L-aspartate + ATP = 2-(N(omega)-L-arginino)succinate + AMP + diphosphate + H(+). Its pathway is amino-acid biosynthesis; L-arginine biosynthesis; L-arginine from L-ornithine and carbamoyl phosphate: step 2/3. This Caldanaerobacter subterraneus subsp. tengcongensis (strain DSM 15242 / JCM 11007 / NBRC 100824 / MB4) (Thermoanaerobacter tengcongensis) protein is Argininosuccinate synthase.